The following is a 148-amino-acid chain: MSVEIESIEHELEESIASLRQAGVRITPQRQAILRYLISSHTHPTADEIYQALSPDFPNISVATIYNNLRVFKDIGIVKELTYGDSSSRFDFNTHNHYHIICEQCGKIVDFQYPQLNEIERLAQHMTDFDVTHHRMEIYGVCKECQDK.

Residues 1–84 (MSVEIESIEH…IGIVKELTYG (84 aa)) form a DNA-binding region. 4 residues coordinate Zn(2+): Cys102, Cys105, Cys142, and Cys145.

Belongs to the Fur family.

The protein localises to the cytoplasm. Its function is as follows. Manganese-dependent repressor that controls a regulon of oxidative stress resistance and iron-storage proteins. May act as a hydrogen peroxide and organic hydroperoxide sensor. This is Peroxide-responsive repressor PerR (perR) from Staphylococcus aureus (strain MW2).